Here is a 238-residue protein sequence, read N- to C-terminus: tRNA (guanine-N(7)-)-methyltransferase (238 aa).

Positions 1-12 are enriched in polar residues; sequence MTDTAENQTPND. The segment at 1 to 20 is disordered; the sequence is MTDTAENQTPNDRQAGHPRS. S-adenosyl-L-methionine contacts are provided by Glu-70, Asp-95, Asp-122, and Asp-145. Asp-145 is an active-site residue. Substrate is bound by residues Lys-149, Asp-181, and 216–219; that span reads TKFE.

The protein belongs to the class I-like SAM-binding methyltransferase superfamily. TrmB family.

The catalysed reaction is guanosine(46) in tRNA + S-adenosyl-L-methionine = N(7)-methylguanosine(46) in tRNA + S-adenosyl-L-homocysteine. It functions in the pathway tRNA modification; N(7)-methylguanine-tRNA biosynthesis. In terms of biological role, catalyzes the formation of N(7)-methylguanine at position 46 (m7G46) in tRNA. This chain is tRNA (guanine-N(7)-)-methyltransferase, found in Neisseria meningitidis serogroup C (strain 053442).